The sequence spans 856 residues: MAIYMSTICFGSIECKLPYSPASCGHVTEEREVLASVEPFMDLEAQLSARLLRQKHATVRVLKNGTCAYRYKTDAQIVRIQKKLERKERDEYHFQMAAPSIVSKITIAGGDPPSKYEPQTPKRVIHTTPRVRKVKKHSIIKLTESQMNHLIKQVKRIMSAKKGSVHLINKKSTHVQYKEILGTTRAAVRTAHMMGLRRRVDFRCDMWTTERLKCLARTDKWSNRVHTINIRKGDSGVILNADSLKGHFGRSSGGLFIVRGSHEGKLYDARSKVTQGVLNSMVQFSNAENFWKGLDDNWARMRYPSDHTCIDGLPVEDCGRVAALMTHSILPCYEITCPTCAQQYANLPASDLFKLLHKHARDGLSRLGSDKDRFVHVNKFLVALEHLTEPVDLNLELFNEIFKSIGEKQQAPFKNLNVLNNFFLKGKENTAHEWQVAQLSLLELARFQKNRTDNIKKGDISFFRNKLSAKANWNLYLSCDNQLDKNANFLWGQREYHAKRFFSNFFEEVDPAKGYSAYEIRKHPNGTRKLSIGNLVVPLDLAEFRQKMKGDYRKQPGVSKRCTSSKDGNYVYPCCCTTLDDGSAIESTFYPPTKKHLVIGNSGDQKYVDLPKGDSEMLYIAKQGYCYINVFLAMLINVSEEDAKDFTKKVRDMCVPKLGTWPTMMDLATTCAQMRIFYPDVHDAELPRILVDHDTQTCHVVDSFGSQTTGYHILKASSVSQLILFANDELESEIKHYRVGGVPNACPELGSTISPFREGGVIMSESAALKLLLKGIFRPKVMRQLLLDEPHLLILSILSPGILMAMYNNGIFELAVRLWINEKQSIAMIASLLSALALRVSAAETLVAQRIIIDAA.

The 144-residue stretch at 141–284 (KLTESQMNHL…QGVLNSMVQF (144 aa)) folds into the Peptidase S30 domain. Catalysis depends on for P1 proteinase activity residues H192, D201, and S235. Residues 592–594 (PTK) carry the Involved in virions binding and aphid transmission motif. A Peptidase C6 domain is found at 618 to 740 (LYIAKQGYCY…ESEIKHYRVG (123 aa)). Active-site for helper component proteinase activity residues include C626 and H699.

This sequence belongs to the potyviridae genome polyprotein family. In terms of processing, genome polyprotein of potyviruses undergoes post-translational proteolytic processing by the main proteinase NIa-pro resulting in the production of at least ten individual proteins. The P1 proteinase and the HC-pro cleave only their respective C-termini autocatalytically. 6K1 is essential for proper proteolytic separation of P3 from CI.

It carries out the reaction Hydrolyzes a Gly-|-Gly bond at its own C-terminus, commonly in the sequence -Tyr-Xaa-Val-Gly-|-Gly, in the processing of the potyviral polyprotein.. Functionally, required for aphid transmission and also has proteolytic activity. Only cleaves a Gly-Gly dipeptide at its own C-terminus. Interacts with virions and aphid stylets. Acts as a suppressor of RNA-mediated gene silencing, also known as post-transcriptional gene silencing (PTGS), a mechanism of plant viral defense that limits the accumulation of viral RNAs. May have RNA-binding activity. This chain is Genome polyprotein, found in Potato virus Y (strain C) (PVY).